The following is a 430-amino-acid chain: UDP-N-acetylglucosamine 1-carboxyvinyltransferase (430 aa).

22–23 provides a ligand contact to phosphoenolpyruvate; sequence KN. A UDP-N-acetyl-alpha-D-glucosamine-binding site is contributed by Arg102. Catalysis depends on Cys126, which acts as the Proton donor. At Cys126 the chain carries 2-(S-cysteinyl)pyruvic acid O-phosphothioketal. UDP-N-acetyl-alpha-D-glucosamine contacts are provided by residues 131 to 135, 172 to 175, Asp317, and Ile339; these read RPVDL and KVSV.

This sequence belongs to the EPSP synthase family. MurA subfamily.

It localises to the cytoplasm. It carries out the reaction phosphoenolpyruvate + UDP-N-acetyl-alpha-D-glucosamine = UDP-N-acetyl-3-O-(1-carboxyvinyl)-alpha-D-glucosamine + phosphate. The protein operates within cell wall biogenesis; peptidoglycan biosynthesis. Cell wall formation. Adds enolpyruvyl to UDP-N-acetylglucosamine. The polypeptide is UDP-N-acetylglucosamine 1-carboxyvinyltransferase (Rhizobium meliloti (strain 1021) (Ensifer meliloti)).